We begin with the raw amino-acid sequence, 304 residues long: Pyridoxal 5'-phosphate synthase subunit PdxS (304 aa).

Asp-34 contacts D-ribose 5-phosphate. The Schiff-base intermediate with D-ribose 5-phosphate role is filled by Lys-91. Gly-163 contributes to the D-ribose 5-phosphate binding site. Residue Arg-175 coordinates D-glyceraldehyde 3-phosphate. D-ribose 5-phosphate is bound by residues Gly-224 and 245 to 246 (GS).

This sequence belongs to the PdxS/SNZ family. In terms of assembly, in the presence of PdxT, forms a dodecamer of heterodimers.

It carries out the reaction aldehydo-D-ribose 5-phosphate + D-glyceraldehyde 3-phosphate + L-glutamine = pyridoxal 5'-phosphate + L-glutamate + phosphate + 3 H2O + H(+). Its pathway is cofactor biosynthesis; pyridoxal 5'-phosphate biosynthesis. Functionally, catalyzes the formation of pyridoxal 5'-phosphate from ribose 5-phosphate (RBP), glyceraldehyde 3-phosphate (G3P) and ammonia. The ammonia is provided by the PdxT subunit. Can also use ribulose 5-phosphate and dihydroxyacetone phosphate as substrates, resulting from enzyme-catalyzed isomerization of RBP and G3P, respectively. This Cutibacterium acnes (strain DSM 16379 / KPA171202) (Propionibacterium acnes) protein is Pyridoxal 5'-phosphate synthase subunit PdxS.